The chain runs to 155 residues: Deoxyuridine 5'-triphosphate nucleotidohydrolase (155 aa).

Residues Arg74 to Gly76, Asn87, and Thr91 to Asp93 each bind substrate.

It belongs to the dUTPase family. The cofactor is Mg(2+).

The enzyme catalyses dUTP + H2O = dUMP + diphosphate + H(+). The protein operates within pyrimidine metabolism; dUMP biosynthesis; dUMP from dCTP (dUTP route): step 2/2. Functionally, this enzyme is involved in nucleotide metabolism: it produces dUMP, the immediate precursor of thymidine nucleotides and it decreases the intracellular concentration of dUTP so that uracil cannot be incorporated into DNA. This Cereibacter sphaeroides (strain KD131 / KCTC 12085) (Rhodobacter sphaeroides) protein is Deoxyuridine 5'-triphosphate nucleotidohydrolase.